The sequence spans 462 residues: 3-isopropylmalate dehydratase large subunit (462 aa).

[4Fe-4S] cluster contacts are provided by C337, C397, and C400.

It belongs to the aconitase/IPM isomerase family. LeuC type 1 subfamily. As to quaternary structure, heterodimer of LeuC and LeuD. [4Fe-4S] cluster serves as cofactor.

The enzyme catalyses (2R,3S)-3-isopropylmalate = (2S)-2-isopropylmalate. Its pathway is amino-acid biosynthesis; L-leucine biosynthesis; L-leucine from 3-methyl-2-oxobutanoate: step 2/4. Its function is as follows. Catalyzes the isomerization between 2-isopropylmalate and 3-isopropylmalate, via the formation of 2-isopropylmaleate. The chain is 3-isopropylmalate dehydratase large subunit from Listeria monocytogenes serotype 4a (strain HCC23).